Consider the following 143-residue polypeptide: Small ribosomal subunit protein uS9A (143 aa).

Ser-2 is subject to N-acetylserine. Lys-30 participates in a covalent cross-link: Glycyl lysine isopeptide (Lys-Gly) (interchain with G-Cter in ubiquitin). Phosphoserine is present on Ser-34. Residues Lys-47 and Lys-59 each participate in a glycyl lysine isopeptide (Lys-Gly) (interchain with G-Cter in ubiquitin) cross-link. At Ser-61 the chain carries Phosphoserine. Thr-70 is subject to Phosphothreonine. A Phosphoserine modification is found at Ser-76. Residues 123 to 143 form a disordered region; it reads RPEPKKFGGKGARSRFQKSYR. Over residues 134-143 the composition is skewed to basic residues; sequence ARSRFQKSYR.

Belongs to the universal ribosomal protein uS9 family. As to quaternary structure, component of the small ribosomal subunit (SSU). Mature yeast ribosomes consist of a small (40S) and a large (60S) subunit. The 40S small subunit contains 1 molecule of ribosomal RNA (18S rRNA) and 33 different proteins (encoded by 57 genes). The large 60S subunit contains 3 rRNA molecules (25S, 5.8S and 5S rRNA) and 46 different proteins (encoded by 81 genes).

It is found in the cytoplasm. Its function is as follows. Component of the ribosome, a large ribonucleoprotein complex responsible for the synthesis of proteins in the cell. The small ribosomal subunit (SSU) binds messenger RNAs (mRNAs) and translates the encoded message by selecting cognate aminoacyl-transfer RNA (tRNA) molecules. The large subunit (LSU) contains the ribosomal catalytic site termed the peptidyl transferase center (PTC), which catalyzes the formation of peptide bonds, thereby polymerizing the amino acids delivered by tRNAs into a polypeptide chain. The nascent polypeptides leave the ribosome through a tunnel in the LSU and interact with protein factors that function in enzymatic processing, targeting, and the membrane insertion of nascent chains at the exit of the ribosomal tunnel. This chain is Small ribosomal subunit protein uS9A, found in Saccharomyces cerevisiae (strain ATCC 204508 / S288c) (Baker's yeast).